The chain runs to 139 residues: Large-conductance mechanosensitive channel (139 aa).

2 helical membrane passes run 9-29 (AFAVKGNVVDMAVGIIIGAAF) and 79-99 (IQTVIDFVIVAFAIFMGVKAI).

This sequence belongs to the MscL family. In terms of assembly, homopentamer.

It localises to the cell inner membrane. Channel that opens in response to stretch forces in the membrane lipid bilayer. May participate in the regulation of osmotic pressure changes within the cell. In Pseudomonas putida (strain GB-1), this protein is Large-conductance mechanosensitive channel.